Consider the following 1332-residue polypeptide: DNA-directed RNA polymerase subunit beta'' (1332 aa).

C220, C291, C298, and C301 together coordinate Zn(2+).

It belongs to the RNA polymerase beta' chain family. RpoC2 subfamily. In terms of assembly, in plastids the minimal PEP RNA polymerase catalytic core is composed of four subunits: alpha, beta, beta', and beta''. When a (nuclear-encoded) sigma factor is associated with the core the holoenzyme is formed, which can initiate transcription. Zn(2+) is required as a cofactor.

The protein localises to the plastid. Its subcellular location is the chloroplast. The enzyme catalyses RNA(n) + a ribonucleoside 5'-triphosphate = RNA(n+1) + diphosphate. Functionally, DNA-dependent RNA polymerase catalyzes the transcription of DNA into RNA using the four ribonucleoside triphosphates as substrates. The protein is DNA-directed RNA polymerase subunit beta'' of Lotus japonicus (Lotus corniculatus var. japonicus).